The sequence spans 447 residues: Glutamate--tRNA ligase 1 (447 aa).

The 'HIGH' region signature appears at 10–20 (PSPTGMLHVGN). A 'KMSKS' region motif is present at residues 240–244 (KISKR). Lys-243 is a binding site for ATP.

This sequence belongs to the class-I aminoacyl-tRNA synthetase family. Glutamate--tRNA ligase type 1 subfamily. Monomer.

Its subcellular location is the cytoplasm. It catalyses the reaction tRNA(Glu) + L-glutamate + ATP = L-glutamyl-tRNA(Glu) + AMP + diphosphate. Its function is as follows. Catalyzes the attachment of glutamate to tRNA(Glu) in a two-step reaction: glutamate is first activated by ATP to form Glu-AMP and then transferred to the acceptor end of tRNA(Glu). This is Glutamate--tRNA ligase 1 from Rickettsia rickettsii (strain Sheila Smith).